Here is a 506-residue protein sequence, read N- to C-terminus: uncharacterized protein (506 aa).

This sequence to R.prowazekii RP789, RP027 and RP028.

This is an uncharacterized protein from Synechocystis sp. (strain ATCC 27184 / PCC 6803 / Kazusa).